Reading from the N-terminus, the 496-residue chain is Galactokinase (496 aa).

Ala-2 is subject to N-acetylalanine. Alpha-D-galactose-binding residues include Arg-56, Glu-62, His-63, and Asp-65. ATP-binding residues include Gly-161, Gly-163, Ser-165, and Ser-166. Asp-210 lines the alpha-D-galactose pocket. Asp-210 functions as the Proton acceptor in the catalytic mechanism. ATP-binding residues include Ser-252, Gln-253, and Lys-254. Tyr-262 provides a ligand contact to alpha-D-galactose.

It belongs to the GHMP kinase family. GalK subfamily. Requires Mg(2+) as cofactor. It depends on Mn(2+) as a cofactor. The cofactor is Ca(2+). Expressed in roots, stems, leaves, flowers and young siliques. Higher expression in the elongating middle stem region than in the lower or upper stem region.

The enzyme catalyses alpha-D-galactose + ATP = alpha-D-galactose 1-phosphate + ADP + H(+). It functions in the pathway carbohydrate metabolism; galactose metabolism. In terms of biological role, sugar-1-kinase with a very high substrate specificity for the alpha-anomeric configuration of D-galacose (D-Gal). Also efficiently converts 2-deoxy-D-Gal to 2-deoxy-D-al-1-phosphate. This Arabidopsis thaliana (Mouse-ear cress) protein is Galactokinase (GAL1).